A 110-amino-acid polypeptide reads, in one-letter code: Large ribosomal subunit protein uL22 (110 aa).

Belongs to the universal ribosomal protein uL22 family. In terms of assembly, part of the 50S ribosomal subunit.

Its function is as follows. This protein binds specifically to 23S rRNA; its binding is stimulated by other ribosomal proteins, e.g. L4, L17, and L20. It is important during the early stages of 50S assembly. It makes multiple contacts with different domains of the 23S rRNA in the assembled 50S subunit and ribosome. The globular domain of the protein is located near the polypeptide exit tunnel on the outside of the subunit, while an extended beta-hairpin is found that lines the wall of the exit tunnel in the center of the 70S ribosome. The sequence is that of Large ribosomal subunit protein uL22 from Saccharophagus degradans (strain 2-40 / ATCC 43961 / DSM 17024).